Reading from the N-terminus, the 336-residue chain is NmrA-like family domain-containing oxidoreductase FrzB (336 aa).

Lys-135 contributes to the NADP(+) binding site.

Belongs to the NmrA-type oxidoreductase family.

The catalysed reaction is 4-{[(2S,5S)-5-[(4-hydroxyphenyl)methyl]-2,5-dihydropyrazin-2-yl]methyl}phenol + 2 NADPH + 2 H(+) = (S,S)-2,5-di-(p-hydroxybenzyl)piperazine + 2 NADP(+). It participates in secondary metabolite biosynthesis. In terms of biological role, nmrA-like family domain-containing oxidoreductase; part of the gene cluster that mediates the biosynthesis of the alkaloid (-)-FR901483, a potent immunosuppressant that shows efficacy in animal models and a probable inhibitor of purine nucleotide biosynthesis by targeting phosphoribosylpyrophosphate amidotransferase (PPAT). Within the pathway, FrzB catalyzes the reduction of 4-{[(2S,5S)-5-[(4-hydroxyphenyl)methyl]-2,5-dihydropyrazin-2-yl]methyl}phenol to produce the (S,S)-dityrosyl-piperazine intermediate. The biosynthesis of (-)-FR901483 starts with the condensation of two L-tyrosines to yield (S,S)-dityrosyl-piperazine. This process occurs in 3 steps with the non-canonical nonribosomal peptide synthetase FrzA catalyzing the reduction of L-tyrosine into L-tyrosinal, the spontaneous condensation of 2 L-tyrosinal units, and the subsequent reduction by the NmrA-like family domain-containing oxidoreductase FrzB. The cytochrome P450 monooxygenase FrzC then performs coupling between N10 and C1' to morph the piperazine into a 1,4-diazabicyclo[3.2.1]octane spiro-fused to a 2,5-cyclohexadienone. The dienone portion is further reduced to cyclohexanone by the flavin-dependent reductase FrzD. The methyltranserases (MTs) FrzE and FrzF are then involved in the methylation at the C10' amine and the C4 phenolic oxygen, respectively. The order of the two MTs appear to be interchangeable. Cleavage of the C9-N10' bond by the dioxygenase FrzG then leads to formation of a conjugated iminium. In addition to the oxidation of C9, an additional dehydrogenation between C7 and C8 can occur to give a likely shunt product. The next biosynthetic step is the intramolecular aldol condensation catalyzed by the newly identified aldolase FrzH to yield an aza-tricyclic product with the formation of a C9-C3' bond. The short-chain dehydrogenase/reductase FrzI then produces dephospho-(-)-FR901483 that is phosphorylated at C4'-OH into (-)-FR901483 by the phosphotransferase FrzJ. In Cladobotryum sp, this protein is NmrA-like family domain-containing oxidoreductase FrzB.